The sequence spans 823 residues: Zygotic DNA replication licensing factor mcm6 (823 aa).

Residues 159 to 186 (CLDCQTLVRDVEQQFKYTQPSICRNPVC) form a C4-type zinc finger. Residues 347-554 (LYHNLCTSLF…TDYAIARRIV (208 aa)) form the MCM domain. Residue 397 to 404 (GDPSTAKS) coordinates ATP. The Arginine finger motif lies at 529-532 (SRFD). A disordered region spans residues 666–713 (NLDQEDEHEAEEEPQEVINGDASVPSGVNGHVNGMNGHAEEPNAATPK). A compositionally biased stretch (acidic residues) spans 667 to 680 (LDQEDEHEAEEEPQ). The segment covering 692–702 (GVNGHVNGMNG) has biased composition (low complexity).

This sequence belongs to the MCM family. Component of the mcm2-7 complex (RLF-M). The complex forms a toroidal hexameric ring with the proposed subunit order mcm2-mcm6-mcm4-mcm7-mcm3-mcm5. Begins to associate with zmcm3, mcm4 and mcm7 into mcm complexes at the neurula stage.

The protein localises to the nucleus. It carries out the reaction ATP + H2O = ADP + phosphate + H(+). Its function is as follows. Acts as a component of the mcm2-7 complex (mcm complex) which is the putative replicative helicase essential for 'once per cell cycle' DNA replication initiation and elongation in eukaryotic cells. The active ATPase sites in the mcm2-7 ring are formed through the interaction surfaces of two neighboring subunits such that a critical structure of a conserved arginine finger motif is provided in trans relative to the ATP-binding site of the Walker A box of the adjacent subunit. The six ATPase active sites, however, are likely to contribute differentially to the complex helicase activity. The existence of maternal and zygotic forms of mcm3 and mcm6 suggests that specific forms of mcm2-7 complexes may be used during different stages of development. May replace mmcm6 in the mcm2-7 complex. The chain is Zygotic DNA replication licensing factor mcm6 from Xenopus tropicalis (Western clawed frog).